The chain runs to 535 residues: Alcohol O-acetyltransferase 2 (535 aa).

The interval 19–36 (GHARRMGHLENYFAVLSR) is membrane association. Catalysis depends on charge relay system residues His189 and Asp193. The membrane association stretch occupies residues 515-532 (RGEWESFCKLFYQTIGEF).

The protein belongs to the ATF1 alcohol acetyltransferase family.

The protein localises to the lipid droplet. The protein resides in the endoplasmic reticulum membrane. The catalysed reaction is an aliphatic alcohol + acetyl-CoA = an acetyl ester + CoA. Functionally, can use acetyl-CoA to synthesize acetate esters from various alcohols, producing ethyl acetate, isoamyl acetate, isobutyl acetate, butyl acetate, hexyl acetate, heptyl acetate and octyl acetate. ATF2 seems to play only a minor role in the acetate ester synthesis, compared to ATF1. Plays an active role in the detoxification hydroxysteroids and possibly certain phytochemicals, in association with the efflux pumps PDR5 and SNQ2. The polypeptide is Alcohol O-acetyltransferase 2 (Saccharomyces cerevisiae (strain ATCC 204508 / S288c) (Baker's yeast)).